We begin with the raw amino-acid sequence, 298 residues long: Bifunctional protein FolD (298 aa).

NADP(+) is bound by residues 167–169 (GRS), Ser-192, and Val-233.

The protein belongs to the tetrahydrofolate dehydrogenase/cyclohydrolase family. Homodimer.

It carries out the reaction (6R)-5,10-methylene-5,6,7,8-tetrahydrofolate + NADP(+) = (6R)-5,10-methenyltetrahydrofolate + NADPH. The catalysed reaction is (6R)-5,10-methenyltetrahydrofolate + H2O = (6R)-10-formyltetrahydrofolate + H(+). It functions in the pathway one-carbon metabolism; tetrahydrofolate interconversion. In terms of biological role, catalyzes the oxidation of 5,10-methylenetetrahydrofolate to 5,10-methenyltetrahydrofolate and then the hydrolysis of 5,10-methenyltetrahydrofolate to 10-formyltetrahydrofolate. The polypeptide is Bifunctional protein FolD (Chelativorans sp. (strain BNC1)).